The following is a 136-amino-acid chain: Large ribosomal subunit protein uL16 (136 aa).

Belongs to the universal ribosomal protein uL16 family. As to quaternary structure, part of the 50S ribosomal subunit.

Functionally, binds 23S rRNA and is also seen to make contacts with the A and possibly P site tRNAs. This chain is Large ribosomal subunit protein uL16, found in Rickettsia prowazekii (strain Madrid E).